Consider the following 94-residue polypeptide: Pyrimidine/purine nucleoside phosphorylase (94 aa).

The protein belongs to the nucleoside phosphorylase PpnP family.

The enzyme catalyses a purine D-ribonucleoside + phosphate = a purine nucleobase + alpha-D-ribose 1-phosphate. It catalyses the reaction adenosine + phosphate = alpha-D-ribose 1-phosphate + adenine. The catalysed reaction is cytidine + phosphate = cytosine + alpha-D-ribose 1-phosphate. It carries out the reaction guanosine + phosphate = alpha-D-ribose 1-phosphate + guanine. The enzyme catalyses inosine + phosphate = alpha-D-ribose 1-phosphate + hypoxanthine. It catalyses the reaction thymidine + phosphate = 2-deoxy-alpha-D-ribose 1-phosphate + thymine. The catalysed reaction is uridine + phosphate = alpha-D-ribose 1-phosphate + uracil. It carries out the reaction xanthosine + phosphate = alpha-D-ribose 1-phosphate + xanthine. Its function is as follows. Catalyzes the phosphorolysis of diverse nucleosides, yielding D-ribose 1-phosphate and the respective free bases. Can use uridine, adenosine, guanosine, cytidine, thymidine, inosine and xanthosine as substrates. Also catalyzes the reverse reactions. The chain is Pyrimidine/purine nucleoside phosphorylase from Pseudomonas putida (strain W619).